Consider the following 502-residue polypeptide: Probable cytosol aminopeptidase (502 aa).

Mn(2+) is bound by residues lysine 269 and aspartate 274. Lysine 281 is a catalytic residue. The Mn(2+) site is built by aspartate 292, aspartate 351, and glutamate 353. Arginine 355 is an active-site residue.

It belongs to the peptidase M17 family. Mn(2+) serves as cofactor.

The protein localises to the cytoplasm. It catalyses the reaction Release of an N-terminal amino acid, Xaa-|-Yaa-, in which Xaa is preferably Leu, but may be other amino acids including Pro although not Arg or Lys, and Yaa may be Pro. Amino acid amides and methyl esters are also readily hydrolyzed, but rates on arylamides are exceedingly low.. The enzyme catalyses Release of an N-terminal amino acid, preferentially leucine, but not glutamic or aspartic acids.. In terms of biological role, presumably involved in the processing and regular turnover of intracellular proteins. Catalyzes the removal of unsubstituted N-terminal amino acids from various peptides. The chain is Probable cytosol aminopeptidase from Aliivibrio fischeri (strain MJ11) (Vibrio fischeri).